A 502-amino-acid chain; its full sequence is Probable cytosol aminopeptidase (502 aa).

Mn(2+) contacts are provided by K269 and D274. K281 is an active-site residue. Mn(2+)-binding residues include D292, D351, and E353. Residue R355 is part of the active site.

It belongs to the peptidase M17 family. It depends on Mn(2+) as a cofactor.

The protein localises to the cytoplasm. It catalyses the reaction Release of an N-terminal amino acid, Xaa-|-Yaa-, in which Xaa is preferably Leu, but may be other amino acids including Pro although not Arg or Lys, and Yaa may be Pro. Amino acid amides and methyl esters are also readily hydrolyzed, but rates on arylamides are exceedingly low.. The enzyme catalyses Release of an N-terminal amino acid, preferentially leucine, but not glutamic or aspartic acids.. Functionally, presumably involved in the processing and regular turnover of intracellular proteins. Catalyzes the removal of unsubstituted N-terminal amino acids from various peptides. The sequence is that of Probable cytosol aminopeptidase from Shewanella loihica (strain ATCC BAA-1088 / PV-4).